A 322-amino-acid polypeptide reads, in one-letter code: Protein mono-ADP-ribosyltransferase PARP16 (322 aa).

Residues 1 to 287 (MQPSGWAAAR…RASSQLSWFS (287 aa)) lie on the Cytoplasmic side of the membrane. In terms of domain architecture, PARP alpha-helical spans 5–91 (GWAAAREAAG…AWDLVSWILS (87 aa)). Asp37 carries the post-translational modification ADP-ribosyl aspartic acid. Glu70 carries the ADP-ribosyl glutamic acid modification. The PARP catalytic domain maps to 94–279 (VLTIHSAGKA…VYSQKPPKRA (186 aa)). N6-(ADP-ribosyl)lysine is present on residues Lys110 and Lys137. NAD(+)-binding residues include His152, Tyr182, and Tyr254. Residues 288-308 (SHWFTVMISLYLLLLLIVSVI) form a helical membrane-spanning segment. Residues 309–322 (NSSAFQHFWNRAKR) are Lumenal-facing.

It belongs to the ARTD/PARP family. Interacts with KPNB1. Auto-mono-ADP-ribosylated.

Its subcellular location is the endoplasmic reticulum membrane. It carries out the reaction L-aspartyl-[protein] + NAD(+) = 4-O-(ADP-D-ribosyl)-L-aspartyl-[protein] + nicotinamide. The enzyme catalyses L-glutamyl-[protein] + NAD(+) = 5-O-(ADP-D-ribosyl)-L-glutamyl-[protein] + nicotinamide. It catalyses the reaction L-lysyl-[protein] + NAD(+) = N(6)-(ADP-D-ribosyl)-L-lysyl-[protein] + nicotinamide + H(+). With respect to regulation, in absence of activation signal, PARP16 is autoinhibited by the PARP alpha-helical domain (also named HD region), which prevents effective NAD(+)-binding. Activity is highly stimulated by signals, which unfold the PARP alpha-helical domain, relieving autoinhibition. Functionally, intracellular mono-ADP-ribosyltransferase that plays a role in different processes, such as protein translation and unfolded protein response (UPR), through the mono-ADP-ribosylation of proteins involved in those processes. Acts as an inhibitor of protein translation by catalyzing mono-ADP-ribosylation of ribosomal subunits, such as RPL14 and RPS6, thereby inhibiting polysome assembly and mRNA loading. Mono-ADP-ribosylation of ribosomal subunits is promoted by NMNAT2. Involved in the unfolded protein response (UPR) by ADP-ribosylating and activating EIF2AK3 and ERN1, two important UPR effectors. May also mediate mono-ADP-ribosylation of karyopherin KPNB1 a nuclear import factor. May not modify proteins on arginine or cysteine residues compared to other mono-ADP-ribosyltransferases. The sequence is that of Protein mono-ADP-ribosyltransferase PARP16 from Homo sapiens (Human).